The primary structure comprises 157 residues: Small ribosomal subunit protein uS7 (157 aa).

Belongs to the universal ribosomal protein uS7 family. In terms of assembly, part of the 30S ribosomal subunit. Contacts proteins S9 and S11.

One of the primary rRNA binding proteins, it binds directly to 16S rRNA where it nucleates assembly of the head domain of the 30S subunit. Is located at the subunit interface close to the decoding center, probably blocks exit of the E-site tRNA. The protein is Small ribosomal subunit protein uS7 of Caulobacter vibrioides (strain ATCC 19089 / CIP 103742 / CB 15) (Caulobacter crescentus).